The chain runs to 210 residues: Proteasome subunit beta (210 aa).

Residues 1–9 (MDNDKHLKG) constitute a propeptide, removed in mature form; by autocatalysis. Residue T10 is the Nucleophile of the active site.

Belongs to the peptidase T1B family. The 20S proteasome core is composed of 14 alpha and 14 beta subunits that assemble into four stacked heptameric rings, resulting in a barrel-shaped structure. The two inner rings, each composed of seven catalytic beta subunits, are sandwiched by two outer rings, each composed of seven alpha subunits. The catalytic chamber with the active sites is on the inside of the barrel. Has a gated structure, the ends of the cylinder being occluded by the N-termini of the alpha-subunits. Is capped at one or both ends by the proteasome regulatory ATPase, PAN.

The protein localises to the cytoplasm. The catalysed reaction is Cleavage of peptide bonds with very broad specificity.. With respect to regulation, the formation of the proteasomal ATPase PAN-20S proteasome complex, via the docking of the C-termini of PAN into the intersubunit pockets in the alpha-rings, triggers opening of the gate for substrate entry. Interconversion between the open-gate and close-gate conformations leads to a dynamic regulation of the 20S proteasome proteolysis activity. In terms of biological role, component of the proteasome core, a large protease complex with broad specificity involved in protein degradation. This chain is Proteasome subunit beta, found in Methanohalophilus mahii (strain ATCC 35705 / DSM 5219 / SLP).